A 450-amino-acid chain; its full sequence is UDP-N-acetylmuramoylalanine--D-glutamate ligase (450 aa).

119–125 (GSNGKTT) is a binding site for ATP.

This sequence belongs to the MurCDEF family.

Its subcellular location is the cytoplasm. The enzyme catalyses UDP-N-acetyl-alpha-D-muramoyl-L-alanine + D-glutamate + ATP = UDP-N-acetyl-alpha-D-muramoyl-L-alanyl-D-glutamate + ADP + phosphate + H(+). Its pathway is cell wall biogenesis; peptidoglycan biosynthesis. Functionally, cell wall formation. Catalyzes the addition of glutamate to the nucleotide precursor UDP-N-acetylmuramoyl-L-alanine (UMA). In Streptococcus gordonii (strain Challis / ATCC 35105 / BCRC 15272 / CH1 / DL1 / V288), this protein is UDP-N-acetylmuramoylalanine--D-glutamate ligase.